Reading from the N-terminus, the 216-residue chain is Phosphorylated carbohydrates phosphatase TM_1254 (216 aa).

Catalysis depends on Asp7, which acts as the Nucleophile.

It belongs to the HAD-like hydrolase superfamily. Co(2+) serves as cofactor. It depends on Mg(2+) as a cofactor. Mn(2+) is required as a cofactor. The cofactor is Ni(2+).

In terms of biological role, displays high phosphatase activity toward erythrose 4-phosphate, fructose 6-phosphate, 2-deoxyglucose 6-phosphate, and mannose 6-phosphate. May have a role in the intracellular metabolism of many phosphorylated carbohydrates. This chain is Phosphorylated carbohydrates phosphatase TM_1254, found in Thermotoga maritima (strain ATCC 43589 / DSM 3109 / JCM 10099 / NBRC 100826 / MSB8).